We begin with the raw amino-acid sequence, 420 residues long: MEMDDDEAILLDDIYALASTPNQTIVTSSFPQTVSPGFLARRNEALAMVEVAVQSTILILTVVGNAAVLAMIVSLSRHKDLGRMYTMIGHLSCADLFVAIFNLLPQLLWDVTHRFRGGRVLCKLVKYVQVVAMYASAYVLMSTAVDRYTAICHPMRSHTWTSTTAHYLVIGAWVLALVFAVPQLVIFDYVEVVPGSGVYDCVDHFRPRWTLPVYITWFALAVYVIPLVVLATIYLRICVVVWKSANRKSTPMINVAARTSGATEQPSLDDASVSFNVADGGGVDLDPSGGGGSLSRHAAQLSHRQQQQQANNVVLSRAKTKTVKLTLTVVISYLVCWAPFFVSHIWSAWDPHAPFEGTEMVITLLLGSLNSCINPWIYLAFSDQLRRKVTQCCPRSWGQRPSTLSHDSTDFRSGSRPTHS.

The Extracellular portion of the chain corresponds to 1 to 54 (MEMDDDEAILLDDIYALASTPNQTIVTSSFPQTVSPGFLARRNEALAMVEVAVQ). Asn22 carries an N-linked (GlcNAc...) asparagine glycan. The helical transmembrane segment at 55–75 (STILILTVVGNAAVLAMIVSL) threads the bilayer. The Cytoplasmic segment spans residues 76 to 83 (SRHKDLGR). A helical transmembrane segment spans residues 84–104 (MYTMIGHLSCADLFVAIFNLL). At 105-124 (PQLLWDVTHRFRGGRVLCKL) the chain is on the extracellular side. Residues Cys122 and Cys201 are joined by a disulfide bond. The chain crosses the membrane as a helical span at residues 125–145 (VKYVQVVAMYASAYVLMSTAV). Residues 146-166 (DRYTAICHPMRSHTWTSTTAH) lie on the Cytoplasmic side of the membrane. A helical transmembrane segment spans residues 167–187 (YLVIGAWVLALVFAVPQLVIF). Topologically, residues 188 to 212 (DYVEVVPGSGVYDCVDHFRPRWTLP) are extracellular. A helical membrane pass occupies residues 213–233 (VYITWFALAVYVIPLVVLATI). At 234 to 328 (YLRICVVVWK…KTKTVKLTLT (95 aa)) the chain is on the cytoplasmic side. The chain crosses the membrane as a helical span at residues 329-349 (VVISYLVCWAPFFVSHIWSAW). At 350–360 (DPHAPFEGTEM) the chain is on the extracellular side. A helical membrane pass occupies residues 361 to 381 (VITLLLGSLNSCINPWIYLAF). At 382–420 (SDQLRRKVTQCCPRSWGQRPSTLSHDSTDFRSGSRPTHS) the chain is on the cytoplasmic side. A disordered region spans residues 397–420 (WGQRPSTLSHDSTDFRSGSRPTHS). Over residues 399–420 (QRPSTLSHDSTDFRSGSRPTHS) the composition is skewed to polar residues.

This sequence belongs to the G-protein coupled receptor 1 family. Vasopressin/oxytocin receptor subfamily. Nephridia in clitellum region.

It is found in the cell membrane. Receptor for annetocin. Activation by annetocin may induce egg-laying behavior through calcium-dependent signaling. The protein is Annetocin receptor of Eisenia fetida (Red wiggler worm).